A 438-amino-acid chain; its full sequence is Plasmalemma vesicle-associated protein (438 aa).

Residues 1–26 (MGLSMDRSPYSRTGDRDRGCWYYLRY) are Cytoplasmic-facing. Residues 27 to 47 (FFLFVSLIQFLIILGLVLFMI) traverse the membrane as a helical; Signal-anchor for type II membrane protein segment. The Extracellular segment spans residues 48-438 (YGNVHATTES…LVNPAVPPSG (391 aa)). Residues asparagine 82, asparagine 88, asparagine 112, and asparagine 150 are each glycosylated (N-linked (GlcNAc...) asparagine). Positions 289–383 (AGIERVTREN…TEVDVRISAL (95 aa)) form a coiled coil. The disordered stretch occupies residues 393–438 (PAIQPRLPGPPPNPPPIDPASLEEFKKRILESQRPPLVNPAVPPSG). Composition is skewed to pro residues over residues 399-410 (LPGPPPNPPPID) and 429-438 (LVNPAVPPSG).

Homodimer. Expressed in lung (alveolar endothelial and bronchial epithelial cells), kidney (endothelium of peritubular capillaries), spleen, liver, adrenal (endothelial cells of the zona reticularis of the cortex and chromaffin cells in the medulla), pancreas (islets of Langerhans), testis (germ cells, interstitial cells in neonatal testis and spermatids), ovary (stromal endothelial, thecal layer of developing follicles, luteal cells within the corpus luteum), intestine (endothelium of capillaries of the intestinal villi) and pituitary (pituicyte cells in the neural lobe) (at protein level). Expressed in lung, kidney, spleen, liver, adrenal, testis, heart, muscle, pituitary, thyroid and ovary.

Its subcellular location is the cell membrane. It is found in the membrane. It localises to the caveola. The protein localises to the cytoplasm. The protein resides in the perinuclear region. Functionally, endothelial cell-specific membrane protein involved in the formation of the diaphragms that bridge endothelial fenestrae. It is also required for the formation of stomata of caveolae and transendothelial channels. Functions in microvascular permeability, endothelial fenestrae contributing to the passage of water and solutes and regulating transcellular versus paracellular flow in different organs. Plays a specific role in embryonic development. In Rattus norvegicus (Rat), this protein is Plasmalemma vesicle-associated protein (Plvap).